Consider the following 417-residue polypeptide: Serine hydroxymethyltransferase (417 aa).

(6S)-5,6,7,8-tetrahydrofolate is bound by residues Leu-121 and 125–127 (GHL). At Lys-229 the chain carries N6-(pyridoxal phosphate)lysine. 355 to 357 (SPF) serves as a coordination point for (6S)-5,6,7,8-tetrahydrofolate.

Belongs to the SHMT family. In terms of assembly, homodimer. It depends on pyridoxal 5'-phosphate as a cofactor.

It localises to the cytoplasm. It catalyses the reaction (6R)-5,10-methylene-5,6,7,8-tetrahydrofolate + glycine + H2O = (6S)-5,6,7,8-tetrahydrofolate + L-serine. The protein operates within one-carbon metabolism; tetrahydrofolate interconversion. Its pathway is amino-acid biosynthesis; glycine biosynthesis; glycine from L-serine: step 1/1. Catalyzes the reversible interconversion of serine and glycine with tetrahydrofolate (THF) serving as the one-carbon carrier. This reaction serves as the major source of one-carbon groups required for the biosynthesis of purines, thymidylate, methionine, and other important biomolecules. Also exhibits THF-independent aldolase activity toward beta-hydroxyamino acids, producing glycine and aldehydes, via a retro-aldol mechanism. This Klebsiella pneumoniae subsp. pneumoniae (strain ATCC 700721 / MGH 78578) protein is Serine hydroxymethyltransferase.